Consider the following 242-residue polypeptide: ATP synthase subunit a (242 aa).

5 consecutive transmembrane segments (helical) span residues 21–41, 83–103, 117–137, 175–195, and 198–218; these read LSSI…AIIC, AVTL…FSIV, DATV…FYGI, LYGN…LFFN, and AWGW…SIFV.

It belongs to the ATPase A chain family. In terms of assembly, F-type ATPases have 2 components, CF(1) - the catalytic core - and CF(0) - the membrane proton channel. CF(1) has five subunits: alpha(3), beta(3), gamma(1), delta(1), epsilon(1). CF(0) has three main subunits: a(1), b(2) and c(9-12). The alpha and beta chains form an alternating ring which encloses part of the gamma chain. CF(1) is attached to CF(0) by a central stalk formed by the gamma and epsilon chains, while a peripheral stalk is formed by the delta and b chains.

It localises to the cell membrane. Functionally, key component of the proton channel; it plays a direct role in the translocation of protons across the membrane. This Staphylococcus aureus (strain Newman) protein is ATP synthase subunit a.